Here is an 849-residue protein sequence, read N- to C-terminus: Thrombospondin type-1 domain-containing protein 1 (849 aa).

The first 24 residues, 1 to 24 (MKQTLKDFSNLLLVVLCDYVLGEA), serve as a signal peptide directing secretion. Over 25–413 (EHLVLGEPGH…QPQAPVKSNN (389 aa)) the chain is Extracellular. Asn-39, Asn-50, Asn-55, Asn-66, Asn-77, Asn-106, and Asn-303 each carry an N-linked (GlcNAc...) asparagine glycan. The 54-residue stretch at 340-393 (IETWGLWQPWSQCSASCGDGVRERRRVCLTSSPSRPGCPGMSSETSPCSLEDCA) folds into the TSP type-1 domain. 3 cysteine pairs are disulfide-bonded: Cys-352/Cys-387, Cys-356/Cys-392, and Cys-367/Cys-377. A helical transmembrane segment spans residues 414–434 (VVTVTGISLCLFIIVATVLIT). At 435–849 (LWRKLGRAPK…STLSVEKLVI (415 aa)) the chain is on the cytoplasmic side. The residue at position 463 (Ser-463) is a Phosphoserine. Disordered stretches follow at residues 472–516 (SEPR…SESF), 595–799 (KSPF…KCQS), and 828–849 (GYFG…KLVI). Residues 479 to 493 (SDAGDGPAGSPGDPG) show a composition bias toward low complexity. Residues 636 to 651 (SQVRSHSRGSHFRRTA) show a composition bias toward basic residues. The segment covering 652-666 (SFHEARQARPFRERS) has biased composition (basic and acidic residues). Residues 720–732 (SPLPKPHSLGPPP) are compositionally biased toward pro residues.

In terms of assembly, part of a complex composed of THSD1, PTK2/FAK1, TLN1 and VCL. Interacts with TLN1.

The protein resides in the endosome membrane. It is found in the cell junction. It localises to the focal adhesion. Its function is as follows. Is a positive regulator of nascent focal adhesion assembly, involved in the modulation of endothelial cell attachment to the extracellular matrix. This is Thrombospondin type-1 domain-containing protein 1 (THSD1) from Bos taurus (Bovine).